Here is a 777-residue protein sequence, read N- to C-terminus: Subtilisin-like protease SBT3.7 (777 aa).

The first 22 residues, 1–22 (MRNHRTSIFVVLSLVIILNGQS), serve as a signal peptide directing secretion. A propeptide spans 23-113 (GFLPRAGAES…VIPDRFYKPA (91 aa)) (activation peptide). The 78-residue stretch at 34-111 (VHIVYLGEKQ…VHVIPDRFYK (78 aa)) folds into the Inhibitor I9 domain. The 508-residue stretch at 117–624 (TWDYLGLSPT…GGLVNPEKAT (508 aa)) folds into the Peptidase S8 domain. Asn133 is a glycosylation site (N-linked (GlcNAc...) asparagine). Asp147 acts as the Charge relay system in catalysis. 2 N-linked (GlcNAc...) asparagine glycosylation sites follow: Asn180 and Asn206. His222 acts as the Charge relay system in catalysis. N-linked (GlcNAc...) asparagine glycosylation is found at Asn237, Asn397, Asn412, and Asn540. Residues 386–481 (SLVYPENPGN…ELGTYILFYI (96 aa)) enclose the PA domain. Residue Ser555 is the Charge relay system of the active site. 3 N-linked (GlcNAc...) asparagine glycosylation sites follow: Asn647, Asn723, and Asn758.

The protein belongs to the peptidase S8 family.

Its subcellular location is the secreted. This is Subtilisin-like protease SBT3.7 from Arabidopsis thaliana (Mouse-ear cress).